A 359-amino-acid chain; its full sequence is UPF0283 membrane protein Atu1356 (359 aa).

A disordered region spans residues 1–39 (MKAPTQNDPQTRRPAAFTLETEEAARPSATQKRAPRSFD). 2 helical membrane-spanning segments follow: residues 75–95 (FGKL…GLWA) and 108–128 (WLGY…LALV).

Belongs to the UPF0283 family.

It is found in the cell inner membrane. This is UPF0283 membrane protein Atu1356 from Agrobacterium fabrum (strain C58 / ATCC 33970) (Agrobacterium tumefaciens (strain C58)).